Here is a 408-residue protein sequence, read N- to C-terminus: Tryptophan--tRNA ligase, chloroplastic/mitochondrial (408 aa).

A chloroplast and mitochondrion-targeting transit peptide spans 1–52 (MGHATSLSHFLILSSSRFSRLGSLTRLLSKPTSLSGSFSSISVTGQGFRCCC). At S53 the chain carries N-acetylserine. ATP-binding positions include Q72 and 78 to 81 (HLGN). The 'HIGH' region motif lies at 73 to 81 (PTGSVHLGN). Residue D197 participates in L-tryptophan binding. ATP is bound by residues 209 to 211 (GED), V260, 269 to 273 (KMSKS), and K272. Residues 269–273 (KMSKS) carry the 'KMSKS' region motif.

The protein belongs to the class-I aminoacyl-tRNA synthetase family.

Its subcellular location is the plastid. The protein resides in the chloroplast. It localises to the mitochondrion. The enzyme catalyses tRNA(Trp) + L-tryptophan + ATP = L-tryptophyl-tRNA(Trp) + AMP + diphosphate + H(+). The chain is Tryptophan--tRNA ligase, chloroplastic/mitochondrial from Arabidopsis thaliana (Mouse-ear cress).